We begin with the raw amino-acid sequence, 114 residues long: Dolichyl-diphosphooligosaccharide--protein glycosyltransferase subunit DAD2 (114 aa).

Topologically, residues 1–30 are cytoplasmic; it reads MPKAAGDAKLLIQSLNKAYAATPTNLKIID. Residues 31 to 51 traverse the membrane as a helical segment; the sequence is LYVVFAVATALVQVVYMGIVG. The Lumenal portion of the chain corresponds to 52–54; it reads SFP. The helical transmembrane segment at 55 to 75 threads the bilayer; it reads FNSFLSGVLSSIGTAVLGVCL. Residues 76–93 are Cytoplasmic-facing; that stretch reads RIQVNKDNKEFKDLPPER. Residues 94-114 traverse the membrane as a helical segment; sequence AFADFVLCNLVLHLVIMNFLG.

The protein belongs to the DAD/OST2 family. As to quaternary structure, component of the oligosaccharyltransferase (OST) complex.

It localises to the endoplasmic reticulum membrane. The protein operates within protein modification; protein glycosylation. Subunit of the oligosaccharyl transferase (OST) complex that catalyzes the initial transfer of a defined glycan (Glc(3)Man(9)GlcNAc(2) in eukaryotes) from the lipid carrier dolichol-pyrophosphate to an asparagine residue within an Asn-X-Ser/Thr consensus motif in nascent polypeptide chains, the first step in protein N-glycosylation. N-glycosylation occurs cotranslationally and the complex associates with the Sec61 complex at the channel-forming translocon complex that mediates protein translocation across the endoplasmic reticulum (ER). All subunits are required for a maximal enzyme activity. This is Dolichyl-diphosphooligosaccharide--protein glycosyltransferase subunit DAD2 (DAD2) from Hordeum vulgare (Barley).